A 684-amino-acid polypeptide reads, in one-letter code: Beta-taxilin (684 aa).

Residues 1–26 (MEANHSEQLSAERQSTPPGDSSSLPS) are compositionally biased toward polar residues. Positions 1 to 132 (MEANHSEQLS…KEPVSNKEQK (132 aa)) are disordered. Basic and acidic residues predominate over residues 45 to 64 (PEKEASVHPDISEELNRQLE). Acidic residues predominate over residues 93 to 107 (ESPDNEDGDCEETTE). Coiled coils occupy residues 135 to 351 (KKIL…VLKE) and 378 to 467 (NEVF…SEKD). Over residues 458–475 (IRDAEISEKDDQSQHNSD) the composition is skewed to basic and acidic residues. Disordered regions lie at residues 458–485 (IRDA…VSVD), 514–632 (ESTP…DVPA), and 646–684 (PACE…EGVD). S474 and S483 each carry phosphoserine. The segment covering 514-524 (ESTPHQSKETQ) has biased composition (basic and acidic residues). Positions 613–622 (QAPQAPTEAS) are enriched in polar residues.

Belongs to the taxilin family. In terms of assembly, binds to the C-terminal coiled coil region of syntaxin family members STX1A, STX3A and STX4A. Has a preference for STX1A. As to expression, expressed in skeletal muscle.

In terms of biological role, promotes motor nerve regeneration. May be involved in intracellular vesicle traffic. The protein is Beta-taxilin (TXLNB) of Homo sapiens (Human).